Here is a 229-residue protein sequence, read N- to C-terminus: Urease accessory protein UreF (229 aa).

This sequence belongs to the UreF family. As to quaternary structure, ureD, UreF and UreG form a complex that acts as a GTP-hydrolysis-dependent molecular chaperone, activating the urease apoprotein by helping to assemble the nickel containing metallocenter of UreC. The UreE protein probably delivers the nickel.

The protein resides in the cytoplasm. Required for maturation of urease via the functional incorporation of the urease nickel metallocenter. This chain is Urease accessory protein UreF, found in Staphylococcus epidermidis (strain ATCC 12228 / FDA PCI 1200).